A 399-amino-acid polypeptide reads, in one-letter code: Elongation factor Tu (399 aa).

One can recognise a tr-type G domain in the interval 10-209; that stretch reads KPHVNIGTIG…AVDSYIPTPK (200 aa). The G1 stretch occupies residues 19–26; that stretch reads GHVDHGKT. 19 to 26 contacts GTP; sequence GHVDHGKT. Residue Thr26 coordinates Mg(2+). The G2 stretch occupies residues 60–64; it reads GITIA. Residues 81 to 84 are G3; that stretch reads DCPG. GTP is bound by residues 81–85 and 136–139; these read DCPGH and NKTD. The segment at 136–139 is G4; sequence NKTD. The interval 174 to 176 is G5; it reads SAL.

The protein belongs to the TRAFAC class translation factor GTPase superfamily. Classic translation factor GTPase family. EF-Tu/EF-1A subfamily. As to quaternary structure, monomer.

It is found in the cytoplasm. The enzyme catalyses GTP + H2O = GDP + phosphate + H(+). Functionally, GTP hydrolase that promotes the GTP-dependent binding of aminoacyl-tRNA to the A-site of ribosomes during protein biosynthesis. This is Elongation factor Tu from Campylobacter hominis (strain ATCC BAA-381 / DSM 21671 / CCUG 45161 / LMG 19568 / NCTC 13146 / CH001A).